Reading from the N-terminus, the 305-residue chain is Tyrosine recombinase XerC (305 aa).

The region spanning 4-95 is the Core-binding (CB) domain; that stretch reads TSIQALINKW…AVKNFYRFLE (92 aa). Residues 116 to 298 enclose the Tyr recombinase domain; it reads LLPKALSEDD…SIKHLEAVYT (183 aa). Active-site residues include R159, K182, H250, R253, and H276. The active-site O-(3'-phospho-DNA)-tyrosine intermediate is Y285.

The protein belongs to the 'phage' integrase family. XerC subfamily. As to quaternary structure, forms a cyclic heterotetrameric complex composed of two molecules of XerC and two molecules of XerD.

The protein localises to the cytoplasm. Site-specific tyrosine recombinase, which acts by catalyzing the cutting and rejoining of the recombining DNA molecules. The XerC-XerD complex is essential to convert dimers of the bacterial chromosome into monomers to permit their segregation at cell division. It also contributes to the segregational stability of plasmids. The polypeptide is Tyrosine recombinase XerC (Rickettsia africae (strain ESF-5)).